Here is a 100-residue protein sequence, read N- to C-terminus: RxLR effector protein PITG_18683 (100 aa).

The N-terminal stretch at 1-22 (MRSFLYGILAFAVLARSSAVAA) is a signal peptide. Residues 43–57 (RSLRVEAQEVIQSGR) carry the RxLR-dEER motif. Positions 78-82 (KPDIK) match the Calmodulin-binding motif motif.

This sequence belongs to the RxLR effector family. In terms of assembly, interacts with the host calmodulin.

The protein localises to the secreted. It localises to the host cell. Functionally, secreted effector that associates with calmodulin to interfere with plant defense-associated calcium signaling in hosts. This chain is RxLR effector protein PITG_18683, found in Phytophthora infestans (strain T30-4) (Potato late blight agent).